Consider the following 125-residue polypeptide: Succinate dehydrogenase cytochrome b560 subunit (125 aa).

3 consecutive transmembrane segments (helical) span residues 29 to 49 (ISGVAMFTLIASPPLFLKLAT), 68 to 88 (ILPWFIVIISVIFLYHIINGI), and 104 to 124 (IIKDSNTLLALVFLIMLFKFI). His-83 serves as a coordination point for heme.

The protein belongs to the cytochrome b560 family. In terms of assembly, forms part of complex II containing four subunits: a 70 kDa flavoprotein (FP), a 27 kDa iron-sulfur protein (IP), a cytochrome B and a membrane-anchoring protein. It depends on heme as a cofactor.

The protein localises to the mitochondrion inner membrane. The protein operates within carbohydrate metabolism; tricarboxylic acid cycle. Its function is as follows. Membrane-anchoring subunit of succinate dehydrogenase (SDH) that is involved in complex II of the mitochondrial electron transport chain and is responsible for transferring electrons from succinate to ubiquinone (coenzyme Q). In Porphyra purpurea (Red seaweed), this protein is Succinate dehydrogenase cytochrome b560 subunit (SDH3).